The following is a 96-amino-acid chain: Putative pterin-4-alpha-carbinolamine dehydratase (96 aa).

It belongs to the pterin-4-alpha-carbinolamine dehydratase family.

It carries out the reaction (4aS,6R)-4a-hydroxy-L-erythro-5,6,7,8-tetrahydrobiopterin = (6R)-L-erythro-6,7-dihydrobiopterin + H2O. This Prochlorococcus marinus (strain MIT 9312) protein is Putative pterin-4-alpha-carbinolamine dehydratase.